Reading from the N-terminus, the 2286-residue chain is Unconventional myosin-IXAb (2286 aa).

The Ras-associating domain occupies 16–114 (SEFTLRVYPG…YRFLLREKNL (99 aa)). The Myosin motor domain maps to 148–971 (AQFVADLCSL…LRQRLQDELH (824 aa)). The helical transmembrane segment at 178–198 (IYTYVGSILIAVNPFKFLPIY) threads the bilayer. Residue 242–249 (GESGSGKT) coordinates ATP. Residues 853–875 (LNKLMETLGQSEPYFVKCIRSNA) form an actin-binding region. 4 consecutive IQ domains span residues 976–996 (RRIV…HFCR), 1025–1054 (QQGA…AVLI), 1066–1095 (RNTA…AAVT), and 1089–1118 (QRRA…QQCR). Positions 976-1113 (RRIVCLQRSF…QSRQRCRILR (138 aa)) are neck or regulatory domain. The tract at residues 1114 to 2254 (EQQCREQSKH…PRANRSCPPK (1141 aa)) is tail. Disordered regions lie at residues 1118–1279 (REQS…QIRE), 1308–1341 (DVPL…FSVS), 1455–1588 (CEED…EPML), and 1732–1754 (DGTI…SDTV). Residues 1123–1133 (HPSTVTKSLHQ) are compositionally biased toward polar residues. Positions 1134 to 1149 (NTEEAEKLEEVWEKQT) are enriched in basic and acidic residues. Residues 1263 to 1273 (PINSAPQTPNR) are compositionally biased toward polar residues. Over residues 1455–1465 (CEEDEDDEYED) the composition is skewed to acidic residues. The span at 1485 to 1501 (CVFHSDSEMSSQKEQKR) shows a compositional bias: basic and acidic residues. Residues 1529 to 1542 (RGKMRFWSKSKHGD) show a composition bias toward basic residues. Composition is skewed to basic and acidic residues over residues 1550–1562 (RSAD…RRND) and 1572–1585 (GVSE…ENRE). The segment at 1759 to 1808 (GHIFKSTQYSIPTYCEFCSSLIWMMDKACVCKLCRYACHKKCCLRMTTKC) adopts a Phorbol-ester/DAG-type zinc-finger fold. The region spanning 1823–2011 (VELSRLTSDE…LIICEQMRKY (189 aa)) is the Rho-GAP domain. The span at 2032-2049 (LTHIRRSMGKSRARKSGH) shows a compositional bias: basic residues. Disordered regions lie at residues 2032 to 2087 (LTHI…QQEE) and 2113 to 2286 (PRAS…EFMV). A coiled-coil region spans residues 2080 to 2107 (QAAMQQEEKVLTQQIENLQKEKEELTYE). 2 stretches are compositionally biased toward low complexity: residues 2176–2192 (SLDS…SVSS) and 2200–2211 (SSSSGPLFSSSS). Polar residues predominate over residues 2226 to 2238 (EQASLSARCASSS). Positions 2254–2270 (KPREPGDTGGRRREHEF) are enriched in basic and acidic residues.

Belongs to the TRAFAC class myosin-kinesin ATPase superfamily. Myosin family.

The protein localises to the membrane. The protein resides in the cytoplasm. Its subcellular location is the synapse. It localises to the cell projection. It is found in the growth cone. Functionally, myosins are actin-based motor molecules with ATPase activity. Unconventional myosins serve in intracellular movements. Regulates Rho by stimulating it's GTPase activity in neurons. Required for the regulation of neurite branching and motor neuron axon guidance. In Danio rerio (Zebrafish), this protein is Unconventional myosin-IXAb (myo9ab).